Here is a 741-residue protein sequence, read N- to C-terminus: Eukaryotic translation initiation factor 3 subunit B (741 aa).

The span at 1 to 10 shows a compositional bias: polar residues; sequence MAPSFDTLSE. The tract at residues 1–22 is disordered; it reads MAPSFDTLSEQDLHEEEEEEID. The span at 13 to 22 shows a compositional bias: acidic residues; that stretch reads LHEEEEEEID. Residues 40–126 enclose the RRM domain; sequence TFVVIDGLPV…HTLLVNKLMD (87 aa). 5 WD repeats span residues 193 to 230, 232 to 289, 303 to 344, 514 to 557, and 572 to 610; these read AHWT…KQKQ, PHPF…RSFV, QPKK…LLGK, IEKK…EKPE, and LEHY…HTFS. Residues 695–722 are disordered; the sequence is KDAYGLPEDVDDPKKAKDAPAVTSEQGE.

This sequence belongs to the eIF-3 subunit B family. As to quaternary structure, component of the eukaryotic translation initiation factor 3 (eIF-3) complex.

It localises to the cytoplasm. In terms of biological role, RNA-binding component of the eukaryotic translation initiation factor 3 (eIF-3) complex, which is involved in protein synthesis of a specialized repertoire of mRNAs and, together with other initiation factors, stimulates binding of mRNA and methionyl-tRNAi to the 40S ribosome. The eIF-3 complex specifically targets and initiates translation of a subset of mRNAs involved in cell proliferation. This chain is Eukaryotic translation initiation factor 3 subunit B (prt1), found in Aspergillus clavatus (strain ATCC 1007 / CBS 513.65 / DSM 816 / NCTC 3887 / NRRL 1 / QM 1276 / 107).